A 563-amino-acid chain; its full sequence is Solute carrier family 22 member 1 (563 aa).

Over 1 to 21 (MLTVDDVLEQVGEFGWFQKQT) the chain is Cytoplasmic. The chain crosses the membrane as a helical span at residues 22 to 42 (FLILCLLSAAFAPIYVGIVFL). Residues 43 to 144 (AFTPDHRCRS…LVCDDSWKVD (102 aa)) lie on the Extracellular side of the membrane. A glycan (N-linked (GlcNAc...) asparagine) is linked at asparagine 71. The chain crosses the membrane as a helical span at residues 145–165 (LFQSCVNLGFFLGSLGVGYIA). Over 166-171 (DRFGRK) the chain is Cytoplasmic. A helical transmembrane segment spans residues 172–192 (VCLLATTLTCASLGVLTAVAP). At 193-196 (DYTS) the chain is on the extracellular side. A helical membrane pass occupies residues 197–219 (LLIFRLLQGLVSKGSWTAGYTLI). Residues 220–232 (TEFVGLGYRRTVA) lie on the Cytoplasmic side of the membrane. Residues 233–253 (ILYQMAFTVGLVLLSGLAYIL) form a helical membrane-spanning segment. The Extracellular portion of the chain corresponds to 254 to 257 (PHWR). Residues 258–278 (WLQLAVSLPIFLLLFRFWFVP) traverse the membrane as a helical segment. Residues 278–282 (PESPR) carry the Proline-rich sequence motif. Over 279-342 (ESPRWLLSQK…FRTPNLRKYT (64 aa)) the chain is Cytoplasmic. Serine 328 bears the Phosphoserine mark. The chain crosses the membrane as a helical span at residues 343-363 (FILMYLWFTSSVVYQGLIMHV). Over 364 to 371 (GATGGNLY) the chain is Extracellular. Residues 372-392 (LDFLYSALVEFPAGFIILVTI) form a helical membrane-spanning segment. The Cytoplasmic segment spans residues 393-398 (DRFGRR). The helical transmembrane segment at 399-418 (YPLATSNLAAGLACFLMIFI) threads the bilayer. The Extracellular portion of the chain corresponds to 419–423 (PHDLP). The helical transmembrane segment at 424-446 (WLNIMVACVGRMGITIVFQMVCL) threads the bilayer. Residues 447 to 459 (VNAELFPTFIRNL) lie on the Cytoplasmic side of the membrane. A helical membrane pass occupies residues 460-480 (GMMVCSSLCDLGGVLTPFLVF). Topologically, residues 481-487 (RLMEVWQ) are extracellular. The helical transmembrane segment at 488 to 508 (GSPLILFAALGLVAGGMTLLL) threads the bilayer. Over 509 to 563 (PETKGVTLPETIEDAENLQRKAKPKENKIYLQVQTSELNTQAAERDASQGTAQQK) the chain is Cytoplasmic.

It belongs to the major facilitator (TC 2.A.1) superfamily. Organic cation transporter (TC 2.A.1.19) family. Phosphorylated.

The protein resides in the basolateral cell membrane. It is found in the apical cell membrane. It localises to the lateral cell membrane. The protein localises to the basal cell membrane. Its subcellular location is the cell membrane. It catalyses the reaction 1-methylnicotinamide(out) = 1-methylnicotinamide(in). The enzyme catalyses dopamine(out) = dopamine(in). The catalysed reaction is serotonin(out) = serotonin(in). It carries out the reaction (R)-adrenaline(out) = (R)-adrenaline(in). It catalyses the reaction (R)-noradrenaline(out) = (R)-noradrenaline(in). The enzyme catalyses histamine(out) = histamine(in). The catalysed reaction is guanidine(out) = guanidine(in). It carries out the reaction choline(out) = choline(in). It catalyses the reaction acetylcholine(in) = acetylcholine(out). The enzyme catalyses thiamine(in) = thiamine(out). The catalysed reaction is spermidine(in) = spermidine(out). It carries out the reaction agmatine(out) = agmatine(in). It catalyses the reaction putrescine(out) = putrescine(in). The enzyme catalyses (R)-carnitine(in) = (R)-carnitine(out). The catalysed reaction is O-isobutanoyl-(R)-carnitine(in) = O-isobutanoyl-(R)-carnitine(out). It carries out the reaction O-acetyl-(R)-carnitine(in) = O-acetyl-(R)-carnitine(out). It catalyses the reaction O-3-hydroxybutanoyl-(R)-carnitine(in) = O-3-hydroxybutanoyl-(R)-carnitine(out). The enzyme catalyses O-propanoyl-(R)-carnitine(in) = O-propanoyl-(R)-carnitine(out). The catalysed reaction is O-butanoyl-(R)-carnitine(in) = O-butanoyl-(R)-carnitine(out). It carries out the reaction O-2-methylbutanoyl-(R)-carnitine(in) = O-2-methylbutanoyl-(R)-carnitine(out). It catalyses the reaction O-3-methylbutanoyl-(R)-carnitine(in) = O-3-methylbutanoyl-(R)-carnitine(out). The enzyme catalyses O-hexanoyl-(R)-carnitine(in) = O-hexanoyl-(R)-carnitine(out). The catalysed reaction is L-histidyl-L-proline diketopiperazine(in) = L-histidyl-L-proline diketopiperazine(out). It carries out the reaction (R)-salsolinol(in) = (R)-salsolinol(out). It catalyses the reaction prostaglandin F2alpha(out) = prostaglandin F2alpha(in). The enzyme catalyses prostaglandin E2(out) = prostaglandin E2(in). Its activity is regulated as follows. Phosphorylation of the transporter leads to changes in its substrate affinity, resulting in a regulation of the transport activity. In contrast with rat ortholog, ASP uptake is inhibited by protein kinase A (PKA) and C (PKC) activation. ASP uptake is also endogenously activated by calmodulin, the calmodulin-dependent kinase II and LCK tyrosine kinase. Inhibited by cGMP, most likely through a cGMP-binding protein that interacts with OCT1. Electrogenic voltage-dependent transporter that mediates the transport of a variety of organic cations such as endogenous bioactive amines, cationic drugs and xenobiotics. Functions as a pH- and Na(+)-independent, bidirectional transporter. Cation cellular uptake or release is driven by the electrochemical potential (i.e. membrane potential and concentration gradient) and substrate selectivity. Hydrophobicity is a major requirement for recognition in polyvalent substrates and inhibitors. Primarily expressed in the basolateral membrane of hepatocytes and proximal tubules and involved in the uptake and disposition of cationic compounds from the blood by hepatic and renal clearance. Most likely functions as an uptake carrier in enterocytes contributing to the intestinal elimination of organic cations from the systemic circulation. Transports endogenous monoamines such as N-1-methylnicotinamide (NMN), guanidine, neurotransmitters dopamine, serotonin, noradrenaline, adrenaline and histamine, and quaternary ammonium compound such as choline. Also transports natural polyamines such as spermidine, agmatine and putrescine at low affinity, but relatively high turnover. Involved in the hepatic and intestinal uptake of the vitamin B1/thiamine, hence regulating hepatic lipid and energy metabolism. Contributes to the influx and efflux of fatty acid carriers carnitines and acylcarnitines across the basolateral membrane of hepatocytes, from the liver to the systemic circulation and inversely and may be involved in regulating the systemic availability of hepatic acylcarnitines. Also capable of transporting non-amine endogenous compounds such as prostaglandin E2 (PGE2) and prostaglandin F2-alpha (PGF2-alpha). May contribute to the transport of cationic compounds in testes across the blood-testis-barrier. Also mediates the uptake of xenobiotics tributylmethylammonium (TBuMA), quinidine, N-methyl-quinine (NMQ), N-methyl-quinidine (NMQD) N-(4,4-azo-n-pentyl)-quinuclidine (APQ), azidoprocainamide methoiodide (AMP), N-(4,4-azo-n-pentyl)-21-deoxyajmalinium (APDA) and 4-(4-(dimethylamino)styryl)-N-methylpyridinium (ASP). This is Solute carrier family 22 member 1 (SLC22A1) from Bos taurus (Bovine).